We begin with the raw amino-acid sequence, 449 residues long: Type 3 secretion system ATPase (449 aa).

178-183 (GCGKTT) serves as a coordination point for ATP.

It belongs to the ATPase alpha/beta chains family. T3SS ATPase subfamily. In terms of assembly, the core secretion machinery of the T3SS is composed of approximately 20 different proteins, including cytoplasmic components, a base, an export apparatus and a needle. This subunit is part of the cytosolic complex. Forms homododecamers. Comprises two hexameric rings that are probably stacked face-to-face by the association of their C-terminal domains. Also present as monomer and homohexamer in solution.

It is found in the cytoplasm. It carries out the reaction ATP + H2O + cellular proteinSide 1 = ADP + phosphate + cellular proteinSide 2.. Oligomerization increases ATPase activity. ATPase component of the type III secretion system (T3SS), also called injectisome, which is used to inject bacterial effector proteins into eukaryotic host cells. Acts as a molecular motor to provide the energy that is required for the export of proteins. Required for type III secretion apparatus (T3SA) formation, proper protein secretion, host cell invasion and virulence. May play a critical role in T3SS substrate recognition, disassembly of the effector/chaperone complex and unfolding of the effector in an ATP-dependent manner prior to secretion. The chain is Type 3 secretion system ATPase from Pseudomonas savastanoi pv. phaseolicola (Pseudomonas syringae pv. phaseolicola).